A 100-amino-acid chain; its full sequence is Ubiquitin-related modifier 1 (100 aa).

The residue at position 100 (G100) is a 1-thioglycine. G100 participates in a covalent cross-link: Glycyl lysine isopeptide (Gly-Lys) (interchain with K-? in acceptor proteins).

The protein belongs to the URM1 family. Post-translationally, C-terminal thiocarboxylation occurs in 2 steps, it is first acyl-adenylated (-COAMP) via the hesA/moeB/thiF part of UBA4, then thiocarboxylated (-COSH) via the rhodanese domain of UBA4.

It localises to the cytoplasm. Its pathway is tRNA modification; 5-methoxycarbonylmethyl-2-thiouridine-tRNA biosynthesis. Acts as a sulfur carrier required for 2-thiolation of mcm(5)S(2)U at tRNA wobble positions of cytosolic tRNA(Lys), tRNA(Glu) and tRNA(Gln). Serves as sulfur donor in tRNA 2-thiolation reaction by being thiocarboxylated (-COSH) at its C-terminus by the MOCS3 homolog UBA4. The sulfur is then transferred to tRNA to form 2-thiolation of mcm(5)S(2)U. Prior mcm(5) tRNA modification by the elongator complex is required for 2-thiolation. Also acts as a ubiquitin-like protein (UBL) that is covalently conjugated via an isopeptide bond to lysine residues of target proteins such as AHP1. The thiocarboxylated form serves as substrate for conjugation and oxidative stress specifically induces the formation of UBL-protein conjugates. The chain is Ubiquitin-related modifier 1 from Eremothecium gossypii (strain ATCC 10895 / CBS 109.51 / FGSC 9923 / NRRL Y-1056) (Yeast).